We begin with the raw amino-acid sequence, 189 residues long: Dihydrofolate reductase (189 aa).

The DHFR domain occupies 3-184 (SLNSIVAVCQ…IQYKFEVYQK (182 aa)). NADP(+)-binding positions include Ala9 and 15-21 (GIGKDGN). Substrate is bound at residue 30-35 (EYKYFQ). 54–56 (KKT) contributes to the NADP(+) binding site. Asn64 and Arg70 together coordinate substrate. NADP(+) contacts are provided by residues 76-78 (SRE) and 116-123 (GGTAVYKA).

The protein belongs to the dihydrofolate reductase family.

The catalysed reaction is (6S)-5,6,7,8-tetrahydrofolate + NADP(+) = 7,8-dihydrofolate + NADPH + H(+). It functions in the pathway cofactor biosynthesis; tetrahydrofolate biosynthesis; 5,6,7,8-tetrahydrofolate from 7,8-dihydrofolate: step 1/1. Its function is as follows. Key enzyme in folate metabolism. Contributes to the de novo mitochondrial thymidylate biosynthesis pathway. Catalyzes an essential reaction for de novo glycine and purine synthesis, and for DNA precursor synthesis. May bind to mRNA. In Gallus gallus (Chicken), this protein is Dihydrofolate reductase (DHFR).